The sequence spans 152 residues: Small ribosomal subunit protein uS8m (152 aa).

Belongs to the universal ribosomal protein uS8 family.

The protein resides in the mitochondrion. This Dictyostelium discoideum (Social amoeba) protein is Small ribosomal subunit protein uS8m (mrps8).